The following is a 607-amino-acid chain: Coronin-like protein cor-1 (607 aa).

WD repeat units lie at residues 77–117 (AHKA…LNRN), 127–167 (GHQK…ALLE), and 170–209 (GHPD…VVHE). Residues 415–564 (PTAAESVPTQ…VSAASDVGHV (150 aa)) are disordered. Residues 424 to 436 (QSYSERPPSSQQP) show a composition bias toward low complexity. Residues 437–447 (SPRPSASPRPR) show a composition bias toward pro residues. Basic and acidic residues-rich tracts occupy residues 473–489 (SRTE…DPMK) and 517–533 (AAAE…RTAD). Residues 544-559 (SSRASASPRGSVSAAS) show a composition bias toward low complexity. Residues 563–602 (HVPQNMDELLEDLMKMKAVLRQHERRIRMLEEEIADRNMS) adopt a coiled-coil conformation.

The protein belongs to the WD repeat coronin family.

The protein localises to the cytoplasm. It localises to the cytoskeleton. Its function is as follows. Required to direct the migration of Q neuroblasts along the anterior axis of the body during larval development. This is dependent on its asymmetric expression in Q neuroblasts. The sequence is that of Coronin-like protein cor-1 (cor-1) from Caenorhabditis elegans.